The sequence spans 245 residues: Enolase-phosphatase E1 (245 aa).

The protein belongs to the HAD-like hydrolase superfamily. MasA/MtnC family. In terms of assembly, monomer. It depends on Mg(2+) as a cofactor.

It catalyses the reaction 5-methylsulfanyl-2,3-dioxopentyl phosphate + H2O = 1,2-dihydroxy-5-(methylsulfanyl)pent-1-en-3-one + phosphate. It functions in the pathway amino-acid biosynthesis; L-methionine biosynthesis via salvage pathway; L-methionine from S-methyl-5-thio-alpha-D-ribose 1-phosphate: step 3/6. Its pathway is amino-acid biosynthesis; L-methionine biosynthesis via salvage pathway; L-methionine from S-methyl-5-thio-alpha-D-ribose 1-phosphate: step 4/6. Bifunctional enzyme that catalyzes the enolization of 2,3-diketo-5-methylthiopentyl-1-phosphate (DK-MTP-1-P) into the intermediate 2-hydroxy-3-keto-5-methylthiopentenyl-1-phosphate (HK-MTPenyl-1-P), which is then dephosphorylated to form the acireductone 1,2-dihydroxy-3-keto-5-methylthiopentene (DHK-MTPene). This chain is Enolase-phosphatase E1, found in Prochlorococcus marinus (strain MIT 9313).